A 432-amino-acid chain; its full sequence is Adenylosuccinate synthetase (432 aa).

GTP contacts are provided by residues 11–17 (GDEGKGK) and 39–41 (GHT). Asp-12 functions as the Proton acceptor in the catalytic mechanism. Mg(2+) is bound by residues Asp-12 and Gly-39. IMP contacts are provided by residues 12–15 (DEGK), 37–40 (NAGH), Thr-134, Arg-148, Asn-230, Thr-245, and Arg-309. His-40 acts as the Proton donor in catalysis. 305 to 311 (VTTGRKR) lines the substrate pocket. GTP is bound by residues Arg-311, 337–339 (KLD), and 419–421 (GTG).

The protein belongs to the adenylosuccinate synthetase family. As to quaternary structure, homodimer. The cofactor is Mg(2+).

The protein localises to the cytoplasm. The catalysed reaction is IMP + L-aspartate + GTP = N(6)-(1,2-dicarboxyethyl)-AMP + GDP + phosphate + 2 H(+). It participates in purine metabolism; AMP biosynthesis via de novo pathway; AMP from IMP: step 1/2. In terms of biological role, plays an important role in the de novo pathway and in the salvage pathway of purine nucleotide biosynthesis. Catalyzes the first committed step in the biosynthesis of AMP from IMP. The chain is Adenylosuccinate synthetase from Candida glabrata (strain ATCC 2001 / BCRC 20586 / JCM 3761 / NBRC 0622 / NRRL Y-65 / CBS 138) (Yeast).